The primary structure comprises 163 residues: Neurotrophin-3 (163 aa).

An N-terminal signal peptide occupies residues 1–3 (IQS). Positions 4–119 (TSMDQGILTE…VLNRTSRRKR (116 aa)) are excised as a propeptide. Asn112 carries N-linked (GlcNAc...) asparagine glycosylation.

Belongs to the NGF-beta family.

The protein resides in the secreted. Seems to promote the survival of visceral and proprioceptive sensory neurons. The protein is Neurotrophin-3 (NTF3) of Epicrates cenchria (Rainbow boa).